The primary structure comprises 163 residues: MIHYVTPDLCDAYPELVQVVEPMFSNFGGRDSFGGEIVTIKCFEDNSLVKEQADQPGAGKVLVVDGGGSLRRALLGDMIAEKAAKNGWEGLVIYGCVRDVDVLAQTDLGVQALAPHPMKTDKRGIGDLNVVVTFASVTFRPGEYVYADNNGVIVSPSPLKMPE.

Residues glycine 76–isoleucine 79 and arginine 98 contribute to the substrate site. Aspartate 99 contributes to the a divalent metal cation binding site.

Belongs to the class II aldolase/RraA-like family. As to quaternary structure, homotrimer. Requires a divalent metal cation as cofactor.

The enzyme catalyses 4-hydroxy-4-methyl-2-oxoglutarate = 2 pyruvate. The catalysed reaction is oxaloacetate + H(+) = pyruvate + CO2. Its function is as follows. Catalyzes the aldol cleavage of 4-hydroxy-4-methyl-2-oxoglutarate (HMG) into 2 molecules of pyruvate. Also contains a secondary oxaloacetate (OAA) decarboxylase activity due to the common pyruvate enolate transition state formed following C-C bond cleavage in the retro-aldol and decarboxylation reactions. The chain is Putative 4-hydroxy-4-methyl-2-oxoglutarate aldolase from Pseudomonas fluorescens.